A 919-amino-acid polypeptide reads, in one-letter code: Chitin synthase 1 (919 aa).

2 disordered regions span residues 1-69 and 109-134; these read MSYD…SFQT and NLASQSGFPPSTPCGGPSSYSSALGP. Residues 11–30 show a composition bias toward low complexity; it reads GQGRDYARQQRQQRSYQLSD. N-linked (GlcNAc...) asparagine glycans are attached at residues Asn-187 and Asn-556. 7 helical membrane-spanning segments follow: residues 594-614, 630-650, 668-688, 713-733, 742-762, 843-863, and 887-919; these read IVLLFSWFALANLWLTFSIII, LVVFHWINQAAKWIYVFFLVL, IASFIVFGILGLYLIFVSLWL, VLIAALAATFGIYLIASILYA, FPQYMMIAPSFINILNVYAFC, LVAFWLLTNGALTVAIENVNG, and IILWATFGLSAFRFIGCLIYWVKRNSTRCFRKT.

Belongs to the chitin synthase family. Class III subfamily.

It localises to the cell membrane. Its subcellular location is the cytoplasmic vesicle membrane. It catalyses the reaction [(1-&gt;4)-N-acetyl-beta-D-glucosaminyl](n) + UDP-N-acetyl-alpha-D-glucosamine = [(1-&gt;4)-N-acetyl-beta-D-glucosaminyl](n+1) + UDP + H(+). In terms of biological role, polymerizes chitin, a structural polymer of the cell wall and septum, by transferring the sugar moiety of UDP-GlcNAc to the non-reducing end of the growing chitin polymer. This Mycosarcoma maydis (Corn smut fungus) protein is Chitin synthase 1.